Consider the following 932-residue polypeptide: Protocadherin gamma-A2 (932 aa).

An N-terminal signal peptide occupies residues 1-28; that stretch reads MAALQKLPHCRKLFLLCFLLATLWEARA. Cadherin domains follow at residues 29-133, 134-242, 243-347, 348-452, 453-562, and 570-682; these read GQIR…APRF, GVEE…APVF, TQPE…APEF, YMTS…APAF, SRTS…PPEI, and DGST…EPSA. At 29–692 the chain is on the extracellular side; the sequence is GQIRYSVREE…KPNDSDLTLY (664 aa). Asparagine 419 and asparagine 545 each carry an N-linked (GlcNAc...) asparagine glycan. Asparagine 685 is a glycosylation site (N-linked (GlcNAc...) asparagine). Residues 693–713 traverse the membrane as a helical segment; the sequence is LVVAVAAVSCVFLAFVIVLLA. Residues 714–932 lie on the Cytoplasmic side of the membrane; sequence HRLRRWHKSR…KKKSGKKEKK (219 aa). Disordered stretches follow at residues 798–841 and 902–932; these read LEEE…WPNN and ATLTNAAGKRDGKAPAGGNGNKKKSGKKEKK. Polar residues predominate over residues 806–841; it reads FSQQAPPNTDWRFSQAQRPGTSGSQNGDDTGTWPNN. The segment covering 922–932 has biased composition (basic residues); that stretch reads NKKKSGKKEKK.

Its subcellular location is the cell membrane. Its function is as follows. Potential calcium-dependent cell-adhesion protein. May be involved in the establishment and maintenance of specific neuronal connections in the brain. This is Protocadherin gamma-A2 (PCDHGA2) from Pan troglodytes (Chimpanzee).